We begin with the raw amino-acid sequence, 284 residues long: MNCPIFLWRIYKYIVHLFTGRSEIERICYNIELKSLDRLALIETSVDYSKQLVHIKKDMKSEFDPGDVAIKIVEIKGFNQELLAFDSIILPNLISALEPISLFQGLKKSIEKKQKIPYDNNNLEHEASLERLWEALLPDVRRSARLSKEWGTLGFQGMDPATDFRGMGILGLDNLIYFSTQHSEDAREILKNSNSKCCYPFAITGINITALVLNLIDKPHFKIYFFKNGSTLTQFNELYSLVFISFDRFYQSKKPKSIMEFNTIKKEFETKISQNSDLVQLLRN.

Positions 124-276 constitute an ELMO domain; it reads EHEASLERLW…EFETKISQNS (153 aa).

The polypeptide is ELMO domain-containing protein B (elmoB) (Dictyostelium discoideum (Social amoeba)).